A 1032-amino-acid chain; its full sequence is GPI inositol-deacylase (1032 aa).

An N-linked (GlcNAc...) asparagine glycan is attached at Asn12. The chain crosses the membrane as a helical span at residues 15-35 (ILTLVSFFGLVLFYLTWYLYT). Residue Ser195 is part of the active site. N-linked (GlcNAc...) asparagine glycans are attached at residues Asn520 and Asn555. Transmembrane regions (helical) follow at residues 703 to 723 (LATISFCVSIILLALVFQVKH) and 740 to 760 (ICSPWVFGSILFTLSILTPIM). N-linked (GlcNAc...) asparagine glycosylation occurs at Asn784. 3 consecutive transmembrane segments (helical) span residues 805–825 (LWFIGPVFFVMGLGIVSLTFY), 861–880 (WANRRIIGVLFVLLVIPIYM), and 884–903 (FAYVVSCIIQSIQVIKILVA). A glycan (N-linked (GlcNAc...) asparagine) is linked at Asn907. The chain crosses the membrane as a helical span at residues 916 to 936 (SLLMLMLWVLPINVPILVVFV). N-linked (GlcNAc...) asparagine glycosylation is found at Asn938 and Asn942. 2 helical membrane-spanning segments follow: residues 943–963 (WTTPFSSHHNFLAILPVILLM) and 985–1005 (AFLAYYVFYCLVYGIRHTYWI).

It belongs to the GPI inositol-deacylase family.

The protein resides in the endoplasmic reticulum membrane. In terms of biological role, involved in inositol deacylation of GPI-anchored proteins which plays important roles in the quality control and ER-associated degradation of GPI-anchored proteins. This is GPI inositol-deacylase (BST1) from Debaryomyces hansenii (strain ATCC 36239 / CBS 767 / BCRC 21394 / JCM 1990 / NBRC 0083 / IGC 2968) (Yeast).